We begin with the raw amino-acid sequence, 90 residues long: Progonadoliberin-1 (90 aa).

A signal peptide spans 1 to 24; that stretch reads MSRHVTVVLLLAIVLLLSSHMIHG. Q25 is subject to Pyrrolidone carboxylic acid. G34 is subject to Glycine amide.

This sequence belongs to the GnRH family. Forebrain.

The protein localises to the secreted. Stimulates the secretion of gonadotropins. In Aquarana catesbeiana (American bullfrog), this protein is Progonadoliberin-1 (gnrh1).